The chain runs to 441 residues: tRNA-2-methylthio-N(6)-dimethylallyladenosine synthase (441 aa).

An MTTase N-terminal domain is found at 5–120 (KLLYIETFGC…LPEMVRAAEQ (116 aa)). [4Fe-4S] cluster-binding residues include Cys14, Cys50, Cys83, Cys158, Cys162, and Cys165. The Radical SAM core domain occupies 144–374 (EGGGVTRFVT…QGLQRDMTIE (231 aa)). In terms of domain architecture, TRAM spans 377–439 (AGFVGTCQAV…PNSLLGELAV (63 aa)).

This sequence belongs to the methylthiotransferase family. MiaB subfamily. Monomer. [4Fe-4S] cluster is required as a cofactor.

It is found in the cytoplasm. It carries out the reaction N(6)-dimethylallyladenosine(37) in tRNA + (sulfur carrier)-SH + AH2 + 2 S-adenosyl-L-methionine = 2-methylsulfanyl-N(6)-dimethylallyladenosine(37) in tRNA + (sulfur carrier)-H + 5'-deoxyadenosine + L-methionine + A + S-adenosyl-L-homocysteine + 2 H(+). In terms of biological role, catalyzes the methylthiolation of N6-(dimethylallyl)adenosine (i(6)A), leading to the formation of 2-methylthio-N6-(dimethylallyl)adenosine (ms(2)i(6)A) at position 37 in tRNAs that read codons beginning with uridine. The protein is tRNA-2-methylthio-N(6)-dimethylallyladenosine synthase of Geobacter metallireducens (strain ATCC 53774 / DSM 7210 / GS-15).